Consider the following 55-residue polypeptide: Large ribosomal subunit protein bL33 (55 aa).

A compositionally biased stretch (basic and acidic residues) spans 1-11 (MAKGGREKIKL). Residues 1 to 27 (MAKGGREKIKLESTAGTGHFYTTSKNK) form a disordered region. The span at 14–24 (TAGTGHFYTTS) shows a compositional bias: polar residues.

This sequence belongs to the bacterial ribosomal protein bL33 family.

This chain is Large ribosomal subunit protein bL33, found in Dechloromonas aromatica (strain RCB).